A 526-amino-acid polypeptide reads, in one-letter code: ATP synthase subunit alpha (526 aa).

Residue 171 to 178 (GDRQTGKT) coordinates ATP.

It belongs to the ATPase alpha/beta chains family. In terms of assembly, F-type ATPases have 2 components, CF(1) - the catalytic core - and CF(0) - the membrane proton channel. CF(1) has five subunits: alpha(3), beta(3), gamma(1), delta(1), epsilon(1). CF(0) has four main subunits: a, b, b' and c.

It is found in the cell inner membrane. The enzyme catalyses ATP + H2O + 4 H(+)(in) = ADP + phosphate + 5 H(+)(out). Functionally, produces ATP from ADP in the presence of a proton gradient across the membrane. The alpha chain is a regulatory subunit. The protein is ATP synthase subunit alpha of Pelodictyon phaeoclathratiforme (strain DSM 5477 / BU-1).